Consider the following 477-residue polypeptide: Ankyrin repeat, SAM and basic leucine zipper domain-containing protein 1 (477 aa).

A phosphoserine mark is found at serine 17, serine 18, and serine 20. ANK repeat units follow at residues 46 to 76 (EKKE…SVDA), 80 to 109 (YGWT…NASF), 112 to 146 (DKQT…DPNV), 150 to 179 (RLMT…EVNT), 183 to 212 (NGYT…NKML), and 216 to 245 (DGKL…PLEG). An SAM domain is found at 274-336 (SYAAFGDLEV…KILAALKELE (63 aa)).

In terms of assembly, interacts with DDX4, PIWIL1, RANBP9 and TDRD1.

It localises to the cytoplasm. Functionally, plays a central role during spermatogenesis by repressing transposable elements and preventing their mobilization, which is essential for the germline integrity. Acts via the piRNA metabolic process, which mediates the repression of transposable elements during meiosis by forming complexes composed of piRNAs and Piwi proteins and governs the methylation and subsequent repression of transposons. Its association with pi-bodies suggests a participation in the primary piRNAs metabolic process. Required prior to the pachytene stage to facilitate the production of multiple types of piRNAs, including those associated with repeats involved in the regulation of retrotransposons. May act by mediating protein-protein interactions during germ cell maturation. This Callithrix jacchus (White-tufted-ear marmoset) protein is Ankyrin repeat, SAM and basic leucine zipper domain-containing protein 1 (ASZ1).